We begin with the raw amino-acid sequence, 1431 residues long: DNA polymerase II large subunit (1431 aa).

Residues 1388–1431 (LLENFANGYNKGKKEEMPKKQRKKEQEKSKKRKVISLDDFFSRK) form a disordered region. Residues 1399-1415 (GKKEEMPKKQRKKEQEK) are compositionally biased toward basic and acidic residues.

It belongs to the archaeal DNA polymerase II family. Heterodimer of a large subunit and a small subunit. This protein undergoes a protein self splicing that involves a post-translational excision of the intervening region (intein) followed by peptide ligation.

The enzyme catalyses DNA(n) + a 2'-deoxyribonucleoside 5'-triphosphate = DNA(n+1) + diphosphate. It carries out the reaction Exonucleolytic cleavage in the 3'- to 5'-direction to yield nucleoside 5'-phosphates.. Possesses two activities: a DNA synthesis (polymerase) and an exonucleolytic activity that degrades single-stranded DNA in the 3'- to 5'-direction. Has a template-primer preference which is characteristic of a replicative DNA polymerase. This Pyrococcus horikoshii (strain ATCC 700860 / DSM 12428 / JCM 9974 / NBRC 100139 / OT-3) protein is DNA polymerase II large subunit (polC).